We begin with the raw amino-acid sequence, 357 residues long: Histidine biosynthesis bifunctional protein HisB (357 aa).

The tract at residues 1-167 (MNDKILFIDR…IHKYLMQNSH (167 aa)) is histidinol-phosphatase. Asp9 functions as the Nucleophile in the catalytic mechanism. Mg(2+) is bound by residues Asp9 and Asp11. Asp11 serves as the catalytic Proton donor. The Zn(2+) site is built by Cys93, His95, Cys101, and Cys103. Asp130 contributes to the Mg(2+) binding site. An imidazoleglycerol-phosphate dehydratase region spans residues 168–357 (RVAHIQRITN…QIPSSKGILL (190 aa)).

It in the N-terminal section; belongs to the histidinol-phosphatase family. This sequence in the C-terminal section; belongs to the imidazoleglycerol-phosphate dehydratase family. It depends on Mg(2+) as a cofactor. Zn(2+) is required as a cofactor.

The protein localises to the cytoplasm. The catalysed reaction is D-erythro-1-(imidazol-4-yl)glycerol 3-phosphate = 3-(imidazol-4-yl)-2-oxopropyl phosphate + H2O. The enzyme catalyses L-histidinol phosphate + H2O = L-histidinol + phosphate. It functions in the pathway amino-acid biosynthesis; L-histidine biosynthesis; L-histidine from 5-phospho-alpha-D-ribose 1-diphosphate: step 6/9. It participates in amino-acid biosynthesis; L-histidine biosynthesis; L-histidine from 5-phospho-alpha-D-ribose 1-diphosphate: step 8/9. The chain is Histidine biosynthesis bifunctional protein HisB from Blochmanniella floridana.